Here is a 396-residue protein sequence, read N- to C-terminus: Elongation factor Tu (396 aa).

Residues 10-206 (KPHVNIGTIG…AVDEYIPDPV (197 aa)) form the tr-type G domain. The segment at 19-26 (GHVDHGKT) is G1. 19 to 26 (GHVDHGKT) contacts GTP. T26 lines the Mg(2+) pocket. Residues 62–66 (GITIN) are G2. Residues 83 to 86 (DAPG) are G3. GTP contacts are provided by residues 83 to 87 (DAPGH) and 138 to 141 (NKSD). The tract at residues 138–141 (NKSD) is G4. The G5 stretch occupies residues 176–178 (SGL).

The protein belongs to the TRAFAC class translation factor GTPase superfamily. Classic translation factor GTPase family. EF-Tu/EF-1A subfamily. Monomer.

It is found in the cytoplasm. The catalysed reaction is GTP + H2O = GDP + phosphate + H(+). Functionally, GTP hydrolase that promotes the GTP-dependent binding of aminoacyl-tRNA to the A-site of ribosomes during protein biosynthesis. The polypeptide is Elongation factor Tu (Micrococcus luteus (strain ATCC 4698 / DSM 20030 / JCM 1464 / CCM 169 / CCUG 5858 / IAM 1056 / NBRC 3333 / NCIMB 9278 / NCTC 2665 / VKM Ac-2230) (Micrococcus lysodeikticus)).